The primary structure comprises 625 residues: UvrABC system protein C (625 aa).

The region spanning 26-105 (LEPGVYFLRD…IKQHQPHFNT (80 aa)) is the GIY-YIG domain. Positions 215–250 (GELLEKLATKMLAASENLDFEQAATIRDQIRGLQAL) constitute a UVR domain.

It belongs to the UvrC family. As to quaternary structure, interacts with UvrB in an incision complex.

The protein resides in the cytoplasm. Functionally, the UvrABC repair system catalyzes the recognition and processing of DNA lesions. UvrC both incises the 5' and 3' sides of the lesion. The N-terminal half is responsible for the 3' incision and the C-terminal half is responsible for the 5' incision. The chain is UvrABC system protein C from Microcystis aeruginosa (strain NIES-843 / IAM M-2473).